The chain runs to 633 residues: Transcriptional repressor p66-alpha (633 aa).

The segment covering 1 to 18 (MTEEACRTRSQKRALERD) has biased composition (basic and acidic residues). Disordered stretches follow at residues 1–59 (MTEE…PTQG) and 73–119 (RGEG…RVNG). Phosphothreonine occurs at positions 20 and 49. Basic and acidic residues predominate over residues 86-99 (RTSHSDMKSERRPP). Residue K93 forms a Glycyl lysine isopeptide (Lys-Gly) (interchain with G-Cter in SUMO2) linkage. A phosphoserine mark is found at S100, S107, S113, S114, and S137. Residues 108-119 (DNEQPSSPRVNG) are compositionally biased toward polar residues. Residues 139–174 (EERERMIKQLKEELRLEEAKLVLLKKLRQSQIQKEA) adopt a coiled-coil conformation. The interval 144–178 (MIKQLKEELRLEEAKLVLLKKLRQSQIQKEATAQK) is CR1; interaction with HDAC1, HDAC2, MBD2 and MTA2. A compositionally biased stretch (polar residues) spans 172 to 188 (KEATAQKPTGSVGSTVT). The segment at 172–238 (KEATAQKPTG…QASSKLGPQA (67 aa)) is disordered. Residue K178 forms a Glycyl lysine isopeptide (Lys-Gly) (interchain with G-Cter in SUMO2) linkage. Positions 181-295 (GSVGSTVTTP…IIQQGLIRVA (115 aa)) are interaction with ZMYND8. The residue at position 189 (T189) is a Phosphothreonine. Positions 196 to 212 (GTQNIPAGKPSLQTSSA) are enriched in polar residues. A Glycyl lysine isopeptide (Lys-Gly) (interchain with G-Cter in SUMO2) cross-link involves residue K204. R225 is subject to Omega-N-methylarginine. Positions 228–238 (QQASSKLGPQA) are enriched in polar residues. A Glycyl lysine isopeptide (Lys-Gly) (interchain with G-Cter in SUMO2) cross-link involves residue K233. An omega-N-methylarginine mark is found at R249, R258, and R273. S275 bears the Phosphoserine mark. Position 285 is an omega-N-methylarginine (R285). Residues S340 and S343 each carry the phosphoserine modification. Positions 340 to 480 (SPASRQAAAK…EIEQRLLQQG (141 aa)) are CR2; histone tail-binding and interaction with CHD4 and CDK2AP1. The GATA-type zinc-finger motif lies at 411–464 (SREPYMCAQCKTDFTCRWREEKSGAIMCENCMTTNQKKALKVEHTSRLKAAFVK). Glycyl lysine isopeptide (Lys-Gly) (interchain with G-Cter in SUMO2) cross-links involve residues K464 and K487. S512 carries the post-translational modification Phosphoserine. Asymmetric dimethylarginine; alternate is present on R539. R539 is modified (omega-N-methylarginine; alternate). Phosphoserine occurs at positions 546 and 548. A Glycyl lysine isopeptide (Lys-Gly) (interchain with G-Cter in SUMO2) cross-link involves residue K550. Position 556 is a phosphoserine (S556). Positions 561–585 (VSRTGRHSERTVSAGKGSATSNWKK) are disordered. K585 is covalently cross-linked (Glycyl lysine isopeptide (Lys-Gly) (interchain with G-Cter in SUMO2)). At S598 the chain carries Phosphoserine. A Glycyl lysine isopeptide (Lys-Gly) (interchain with G-Cter in SUMO2) cross-link involves residue K605.

Homooligomer. Component of the nucleosome remodeling and deacetylase (NuRD) repressor complex, composed of core proteins MTA1, MTA2, MTA3, RBBP4, RBBP7, HDAC1, HDAC2, MBD2, MBD3, and peripherally associated proteins CDK2AP1, CDK2AP2, GATAD2A, GATAD2B, CHD3, CHD4 and CHD5. The exact stoichiometry of the NuRD complex is unknown, and some subunits such as MBD2 and MBD3, GATAD2A and GATAD2B, and CHD3, CHD4 and CHD5 define mutually exclusive NuRD complexes. Component of the MeCP1 histone deacetylase complex. Interacts with CDK2AP1. Interacts with CHD4. Interacts with ERCC6. Interacts with HDAC1. Interacts with HDAC2. Interacts with MBD2; this interaction is required for the enhancement of MBD2-mediated repression and for targeting to the chromatin. Interacts with MBD3. Interacts with MTA2. Interacts with ZMYND8. Interacts with histone tails, including that of histones H2A, H2B, H3 and H4, the interaction is reduced by histone acetylation. As to expression, ubiquitous, both in fetal and adult tissues.

The protein localises to the nucleus speckle. It localises to the nucleus. The protein resides in the chromosome. Functionally, transcriptional repressor. Acts as a component of the histone deacetylase NuRD complex which participates in the remodeling of chromatin. Enhances MBD2-mediated repression. Efficient repression requires the presence of GATAD2B. This is Transcriptional repressor p66-alpha (GATAD2A) from Homo sapiens (Human).